A 441-amino-acid chain; its full sequence is Polycomb protein EED (441 aa).

The segment at 1 to 72 is disordered; the sequence is MSEREVSTAP…PGRKSWGKGK (72 aa). Serine 2 bears the N-acetylserine mark. Phosphoserine is present on residues serine 2 and serine 34. The span at 45–61 shows a compositional bias: polar residues; the sequence is ESGTNTERPDTPTNTPN. The residue at position 55 (threonine 55) is a Phosphothreonine. Lysine 66 bears the N6,N6,N6-trimethyllysine; alternate mark. The residue at position 66 (lysine 66) is an N6,N6-dimethyllysine; alternate. An N6-methyllysine; alternate modification is found at lysine 66. The tract at residues 81 to 441 is interaction with EZH2; that stretch reads SFKCVNSLKE…ASIWRWDRLR (361 aa). WD repeat units follow at residues 91–134, 142–185, 188–228, and 234–275; these read DHNQ…EIRL, DADE…CIKH, GHGN…LVAI, and GHRD…NAIK. 2 required for interaction with the matrix protein MA of HIV-1 regions span residues 149 to 303 and 301 to 441; these read TCAW…STRD and TRDI…DRLR. N6,N6,N6-trimethyllysine; alternate occurs at positions 197, 268, and 284. Lysine 197, lysine 268, and lysine 284 each carry N6,N6-dimethyllysine; alternate. 3 positions are modified to N6-methyllysine; alternate: lysine 197, lysine 268, and lysine 284. WD repeat units lie at residues 304-341, 359-399, and 408-441; these read IHRNYVDCVRWLGDLILSKSCENAIVCWKPGKMEDDID, SQCD…PHKA, and KCGAAIRQTSFSRDSSILIAVCDDASIWRWDRLR.

Belongs to the WD repeat ESC family. As to quaternary structure, component of the PRC2/EED-EZH2 complex, which includes EED, EZH2, SUZ12, RBBP4 and RBBP7 and possibly AEBP2. The minimum components required for methyltransferase activity of the PRC2/EED-EZH2 complex are EED, EZH2 and SUZ12. Component of the PRC2/EED-EZH1 complex, which includes EED, EZH1, SUZ12, RBBP4 and AEBP2. The PRC2 complex may also interact with DNMT1, DNMT3A, DNMT3B and PHF1 via the EZH2 subunit and with SIRT1 via the SUZ12 subunit. Interacts with HDAC, HDAC2, histone H1 and YY1. May interact with ITGA4, ITGAE and ITGB7. Interacts with CDYL. Interacts with BMAL1. Interacts with KMT2A/MLL1. In terms of assembly, (Microbial infection) May interact with the MA protein of HIV-1. In terms of processing, methylated. Binding to histone H1 'Lys-26' promotes mono-, di-, and trimethylation of internal lysines. Expressed in brain, colon, heart, kidney, liver, lung, muscle, ovary, peripheral blood leukocytes, pancreas, placenta, prostate, spleen, small intestine, testis, thymus and uterus. Appears to be overexpressed in breast and colon cancer.

The protein localises to the nucleus. Its subcellular location is the chromosome. In terms of biological role, polycomb group (PcG) protein. Component of the PRC2/EED-EZH2 complex, which methylates 'Lys-9' and 'Lys-27' of histone H3, leading to transcriptional repression of the affected target gene. Also recognizes 'Lys-26' trimethylated histone H1 with the effect of inhibiting PRC2 complex methyltransferase activity on nucleosomal histone H3 'Lys-27', whereas H3 'Lys-27' recognition has the opposite effect, enabling the propagation of this repressive mark. The PRC2/EED-EZH2 complex may also serve as a recruiting platform for DNA methyltransferases, thereby linking two epigenetic repression systems. Genes repressed by the PRC2/EED-EZH2 complex include HOXC8, HOXA9, MYT1 and CDKN2A. This Homo sapiens (Human) protein is Polycomb protein EED.